Reading from the N-terminus, the 298-residue chain is UDP-N-acetylenolpyruvoylglucosamine reductase (298 aa).

In terms of domain architecture, FAD-binding PCMH-type spans 26-190 (RAGGPAERLY…VAAVLDLEPG (165 aa)). Residue arginine 170 is part of the active site. Serine 219 serves as the catalytic Proton donor. Glutamate 289 is a catalytic residue.

Belongs to the MurB family. The cofactor is FAD.

Its subcellular location is the cytoplasm. It carries out the reaction UDP-N-acetyl-alpha-D-muramate + NADP(+) = UDP-N-acetyl-3-O-(1-carboxyvinyl)-alpha-D-glucosamine + NADPH + H(+). The protein operates within cell wall biogenesis; peptidoglycan biosynthesis. Cell wall formation. This is UDP-N-acetylenolpyruvoylglucosamine reductase from Alkalilimnicola ehrlichii (strain ATCC BAA-1101 / DSM 17681 / MLHE-1).